The chain runs to 123 residues: Defensin beta 118 (123 aa).

A signal peptide spans 1–19 (MKLLLLALPMLVLLPQVIP). Cystine bridges form between Cys27/Cys54, Cys34/Cys48, and Cys38/Cys55. Positions 65–123 (VPATSPTPLSDSTPGIIDDILTVRFTTDYFEVSSKKDMVEESEAGRGTETSLPNVHHSS) are excised as a propeptide. The span at 100–110 (KDMVEESEAGR) shows a compositional bias: basic and acidic residues. The segment at 100–123 (KDMVEESEAGRGTETSLPNVHHSS) is disordered. Positions 112–123 (TETSLPNVHHSS) are enriched in polar residues.

It belongs to the beta-defensin family. Post-translationally, the three-dimensional structure formed by the three intramolecular disulfide bridges is indispensable for antimicrobial activity. High-level and epididymis-specific expression. Most abundant in the epithelium of the caput and present in the epididymis lumen and bound to sperm. Also expressed in pancreas.

The protein localises to the secreted. Functionally, host defense peptide that exhibits antimicrobial activity against both Gram-negative bacteria, such as E.coli and S.typhimurium, and Gram-positive bacteria, such as S.aureus and B.subtilis. Inhibits cell adhesion of E.coli on intestinal epithelial enterocytes. Causes rapid permeabilization of both the outer and inner membrane of E.coli, leading to morphological alterations on the bacterial surface. Binds to bacterial lipopolysaccharides (LPS) with high affinity, and may thereby be involved in immunoregulation through LPS neutralization. May contribute to epididymal innate immunity and protect the sperm against attack by microorganisms. This chain is Defensin beta 118 (DEFB118), found in Homo sapiens (Human).